A 429-amino-acid chain; its full sequence is Glutamate-1-semialdehyde 2,1-aminomutase 2 (429 aa).

K268 bears the N6-(pyridoxal phosphate)lysine mark.

Belongs to the class-III pyridoxal-phosphate-dependent aminotransferase family. HemL subfamily. Homodimer. Requires pyridoxal 5'-phosphate as cofactor.

It is found in the cytoplasm. It carries out the reaction (S)-4-amino-5-oxopentanoate = 5-aminolevulinate. Its pathway is porphyrin-containing compound metabolism; protoporphyrin-IX biosynthesis; 5-aminolevulinate from L-glutamyl-tRNA(Glu): step 2/2. This is Glutamate-1-semialdehyde 2,1-aminomutase 2 from Halalkalibacterium halodurans (strain ATCC BAA-125 / DSM 18197 / FERM 7344 / JCM 9153 / C-125) (Bacillus halodurans).